Here is a 98-residue protein sequence, read N- to C-terminus: UPF0213 protein LACR_2011 (98 aa).

The 78-residue stretch at 2 to 79 (NTHFTYVLQC…KLVRQQKLKL (78 aa)) folds into the GIY-YIG domain.

Belongs to the UPF0213 family.

This chain is UPF0213 protein LACR_2011, found in Lactococcus lactis subsp. cremoris (strain SK11).